A 304-amino-acid chain; its full sequence is Trypsin-3 (304 aa).

Residues 81–301 (IVGGYTCEEN…YVDWIKDTIA (221 aa)) enclose the Peptidase S1 domain. 5 disulfides stabilise this stretch: C87–C217, C105–C121, C196–C263, C228–C242, and C253–C277. Catalysis depends on H120, which acts as the Charge relay system. Ca(2+) contacts are provided by E132, N134, V137, E139, and E142. The active-site Charge relay system is the D164. Sulfotyrosine is present on Y211. S257 (charge relay system) is an active-site residue.

It belongs to the peptidase S1 family. It depends on Ca(2+) as a cofactor. In terms of tissue distribution, detected in pancreas and pancreatic fluid (at protein level). Expressed in pancreas and brain. Detected in ileum.

It is found in the secreted. It catalyses the reaction Preferential cleavage: Arg-|-Xaa, Lys-|-Xaa.. Its activity is regulated as follows. Not inhibited by Kunitz-type trypsin inhibitors. Its function is as follows. Digestive protease that cleaves proteins preferentially after an Arg residue and has proteolytic activity toward Kunitz-type trypsin inhibitors. The chain is Trypsin-3 (PRSS3) from Homo sapiens (Human).